The following is a 117-amino-acid chain: Large ribosomal subunit protein eL34 (117 aa).

Ser-12 carries the phosphoserine modification. N6-acetyllysine occurs at positions 36 and 43. Lys-108 is covalently cross-linked (Glycyl lysine isopeptide (Lys-Gly) (interchain with G-Cter in SUMO2)).

It belongs to the eukaryotic ribosomal protein eL34 family. Component of the large ribosomal subunit.

It is found in the cytoplasm. Its subcellular location is the cytosol. It localises to the endoplasmic reticulum. In terms of biological role, component of the large ribosomal subunit. The ribosome is a large ribonucleoprotein complex responsible for the synthesis of proteins in the cell. The chain is Large ribosomal subunit protein eL34 (Rpl34) from Mus musculus (Mouse).